The sequence spans 837 residues: A disintegrin and metalloproteinase with thrombospondin motifs 4 (837 aa).

A signal peptide spans 1–51 (MSQTGSHPGRGLAGRWLWGAQPCLLLPIVPLSWLVWLLLLLLASLLPSARL). Residues 52–212 (ASPLPREEEI…PSPRPRRAKR (161 aa)) constitute a propeptide that is removed on maturation. N-linked (GlcNAc...) asparagine glycosylation is present at Asn68. Residues 166-191 (EGGTPNSAGGPGAHILRRKSPASGQG) form a disordered region. Positions 192–199 (PMCNVKAP) match the Cysteine switch motif. Cys194 is a binding site for Zn(2+). A Peptidase M12B domain is found at 218 to 428 (RFVETLVVAD…GYGHCLLDKP (211 aa)). 11 disulfide bridges follow: Cys293–Cys345, Cys322–Cys327, Cys339–Cys423, Cys377–Cys407, Cys449–Cys472, Cys460–Cys482, Cys467–Cys501, Cys495–Cys506, Cys532–Cys569, Cys536–Cys574, and Cys547–Cys559. His361 is a binding site for Zn(2+). Glu362 is a catalytic residue. Zn(2+)-binding residues include His365 and His371. In terms of domain architecture, Disintegrin spans 437–519 (TFPGKDYDAD…DQLQDFNIPQ (83 aa)). Positions 520–575 (AGGWGPWGPWGDCSRTCGGGVQFSSRDCTRPVPRNGGKYCEGRRTRFRSCNTEDCP) constitute a TSP type-1 domain. The segment at 686–837 (SKQSGSFRKF…LRRRPWVGRK (152 aa)) is spacer.

Interacts with SRPX2. It depends on Zn(2+) as a cofactor. In terms of processing, the precursor is cleaved by a furin endopeptidase. Post-translationally, glycosylated. Can be O-fucosylated by POFUT2 on a serine or a threonine residue found within the consensus sequence C1-X(2)-(S/T)-C2-G of the TSP type-1 repeat domains where C1 and C2 are the first and second cysteine residue of the repeat, respectively. Fucosylated repeats can then be further glycosylated by the addition of a beta-1,3-glucose residue by the glucosyltransferase, B3GALTL. Fucosylation mediates the efficient secretion of ADAMTS family members. Can also be C-glycosylated with one or two mannose molecules on tryptophan residues within the consensus sequence W-X-X-W of the TPRs, and N-glycosylated. These other glycosylations can also facilitate secretion.

It localises to the secreted. The protein resides in the extracellular space. It is found in the extracellular matrix. It carries out the reaction Glutamyl endopeptidase. Bonds cleaved include 370-Thr-Glu-Gly-Glu-|-Ala-Arg-Gly-Ser-377 in the interglobular domain of mammalian aggrecan.. Functionally, cleaves aggrecan, a cartilage proteoglycan, at the '392-Glu-|-Ala-393' site and may be involved in its turnover. Also cleaves COMP. May play an important role in the destruction of aggrecan in arthritic diseases. This Pongo abelii (Sumatran orangutan) protein is A disintegrin and metalloproteinase with thrombospondin motifs 4 (ADAMTS4).